Reading from the N-terminus, the 62-residue chain is Large ribosomal subunit protein uL30 (62 aa).

It belongs to the universal ribosomal protein uL30 family. Part of the 50S ribosomal subunit.

The protein is Large ribosomal subunit protein uL30 of Cereibacter sphaeroides (strain ATCC 17029 / ATH 2.4.9) (Rhodobacter sphaeroides).